The primary structure comprises 940 residues: Insulin receptor substrate 1 (940 aa).

One can recognise a PH domain in the interval 8-109 (GMVLSGYHKK…WLDKLLLLQR (102 aa)). One can recognise an IRS-type PTB domain in the interval 122–236 (YEHVWQVIIQ…SAMSAKTDSN (115 aa)). Phosphoserine is present on residues Ser-284, Ser-285, and Ser-340. Tyr-407 bears the Phosphotyrosine; by INSR mark. The YXXM motif 1 signature appears at 407–410 (YIPM). The span at 523–540 (NRSQNNISKEGPISGTST) shows a compositional bias: polar residues. The tract at residues 523-549 (NRSQNNISKEGPISGTSTNREKKSTSA) is disordered. At Ser-548 the chain carries Phosphoserine. Residues 639-642 (YLEM) carry the YXXM motif 2 motif. At Tyr-883 the chain carries Phosphotyrosine; by INSR. Positions 895 to 915 (NPAKYLKRGSRESPPVATCAE) are disordered. Ser-904 and Ser-907 each carry phosphoserine. Tyr-920 is subject to Phosphotyrosine; by INSR.

As to quaternary structure, bindings to phosphatidylinositol 3-kinase and SHP2.

Activates phosphatidylinositol 3-kinase when bound to the regulatory p85 subunit. May mediate the control of various cellular processes by insulin-like peptides. When phosphorylated by the insulin receptor binds specifically to various cellular proteins containing SH2 domains. Involved in control of cell proliferation, cell size, and body and organ growth throughout development. Also has a role in a signaling pathway controlling the physiological response required to endure periods of low nutrient conditions. Insulin/insulin-like growth factor (IGF) signaling pathway has a role in regulating aging and is necessary in the ovary for vitellogenic maturation. This is Insulin receptor substrate 1 from Drosophila ananassae (Fruit fly).